Here is a 300-residue protein sequence, read N- to C-terminus: Urease accessory protein UreD (300 aa).

This sequence belongs to the UreD family. As to quaternary structure, ureD, UreF and UreG form a complex that acts as a GTP-hydrolysis-dependent molecular chaperone, activating the urease apoprotein by helping to assemble the nickel containing metallocenter of UreC. The UreE protein probably delivers the nickel.

The protein resides in the cytoplasm. Required for maturation of urease via the functional incorporation of the urease nickel metallocenter. This Prochlorococcus marinus (strain MIT 9215) protein is Urease accessory protein UreD.